Reading from the N-terminus, the 120-residue chain is Small ribosomal subunit protein bS16 (120 aa).

The disordered stretch occupies residues glycine 81–alanine 120. Positions glutamate 95–lysine 110 are enriched in basic and acidic residues. Low complexity predominate over residues alanine 111–alanine 120.

The protein belongs to the bacterial ribosomal protein bS16 family.

In Methylobacterium radiotolerans (strain ATCC 27329 / DSM 1819 / JCM 2831 / NBRC 15690 / NCIMB 10815 / 0-1), this protein is Small ribosomal subunit protein bS16.